The sequence spans 124 residues: Small ribosomal subunit protein uS12 (124 aa).

The residue at position 89 (aspartate 89) is a 3-methylthioaspartic acid.

The protein belongs to the universal ribosomal protein uS12 family. As to quaternary structure, part of the 30S ribosomal subunit. Contacts proteins S8 and S17. May interact with IF1 in the 30S initiation complex.

In terms of biological role, with S4 and S5 plays an important role in translational accuracy. Its function is as follows. Interacts with and stabilizes bases of the 16S rRNA that are involved in tRNA selection in the A site and with the mRNA backbone. Located at the interface of the 30S and 50S subunits, it traverses the body of the 30S subunit contacting proteins on the other side and probably holding the rRNA structure together. The combined cluster of proteins S8, S12 and S17 appears to hold together the shoulder and platform of the 30S subunit. This is Small ribosomal subunit protein uS12 from Shewanella baltica (strain OS223).